The chain runs to 183 residues: UPF0398 protein LSL_0930 (183 aa).

Belongs to the UPF0398 family.

The polypeptide is UPF0398 protein LSL_0930 (Ligilactobacillus salivarius (strain UCC118) (Lactobacillus salivarius)).